The following is a 584-amino-acid chain: Arginine--tRNA ligase (584 aa).

A 'HIGH' region motif is present at residues Pro-126–His-136.

Belongs to the class-I aminoacyl-tRNA synthetase family. Monomer.

It localises to the cytoplasm. The enzyme catalyses tRNA(Arg) + L-arginine + ATP = L-arginyl-tRNA(Arg) + AMP + diphosphate. This is Arginine--tRNA ligase from Synechococcus elongatus (strain ATCC 33912 / PCC 7942 / FACHB-805) (Anacystis nidulans R2).